The sequence spans 409 residues: MSSSVYITVELVIAVLAILGNVLVCWAVWINSNLQNVTNYFVVSLAAADIAVGVLAIPFAITISTGFCAACHGCLFFACFVLVLTQSSIFSLLTITIDRYIAIRIPLRYNGLVTCTRAKGIIAICWVLSFAIGLTPMLGWNNCSQPKGDKNHSESCDEGQVTCLFEDVVPMNYMVYYNFFAFVLVPLLLMLGIYLRIFLAARRQLKQMESQPLPGERTRSTLQKEVHPAKSLAIIVGLFALCCLPLNIINCFTFFCPECDHAPPWLMYLTIILSHGNSVVNPLIYAYRIREFRQTFRKIIRSHILRRRELFKAGGTSARASAAHSPEGEQVSLRLNGHPPGVWANGSALRPEQRPNGYVLGLVSGRSAQRSHGDASLSDVELLSHEHKGTCPESPSLEDPPAHGGAGVS.

Over 1–4 (MSSS) the chain is Extracellular. A helical transmembrane segment spans residues 5 to 29 (VYITVELVIAVLAILGNVLVCWAVW). Residues 30–39 (INSNLQNVTN) lie on the Cytoplasmic side of the membrane. Residues 40–63 (YFVVSLAAADIAVGVLAIPFAITI) traverse the membrane as a helical segment. Residues 64 to 74 (STGFCAACHGC) are Extracellular-facing. Disulfide bonds link C68–C156, C71–C143, and C74–C163. A helical transmembrane segment spans residues 75-97 (LFFACFVLVLTQSSIFSLLTITI). Over 98-117 (DRYIAIRIPLRYNGLVTCTR) the chain is Cytoplasmic. Residues 118 to 140 (AKGIIAICWVLSFAIGLTPMLGW) traverse the membrane as a helical segment. Residues 141-170 (NNCSQPKGDKNHSESCDEGQVTCLFEDVVP) are Extracellular-facing. N142 and N151 each carry an N-linked (GlcNAc...) asparagine glycan. E166 is a binding site for adenosine. The helical transmembrane segment at 171-195 (MNYMVYYNFFAFVLVPLLLMLGIYL) threads the bilayer. The Cytoplasmic segment spans residues 196-231 (RIFLAARRQLKQMESQPLPGERTRSTLQKEVHPAKS). The helical transmembrane segment at 232–255 (LAIIVGLFALCCLPLNIINCFTFF) threads the bilayer. N250 serves as a coordination point for adenosine. C256 and C259 form a disulfide bridge. Topologically, residues 256-263 (CPECDHAP) are extracellular. A helical membrane pass occupies residues 264-287 (PWLMYLTIILSHGNSVVNPLIYAY). S274 and H275 together coordinate adenosine. Topologically, residues 288–409 (RIREFRQTFR…PPAHGGAGVS (122 aa)) are cytoplasmic. 2 disordered regions span residues 316 to 336 (TSARASAAHSPEGEQVSLRLN) and 369 to 409 (QRSH…AGVS).

This sequence belongs to the G-protein coupled receptor 1 family. As to quaternary structure, interacts (via cytoplasmic C-terminal domain) with USP4; the interaction is direct. May interact with DRD4. Interacts with NECAB2. Interacts (via cytoplasmic C-terminal domain) with GAS2L2; interaction enhances receptor-mediated adenylyl cyclase activity. Ubiquitinated. Deubiquitinated by USP4; leading to stabilization and expression at the cell surface.

It localises to the cell membrane. Functionally, receptor for adenosine. The activity of this receptor is mediated by G proteins which activate adenylyl cyclase. The polypeptide is Adenosine receptor A2a (ADORA2A) (Cavia porcellus (Guinea pig)).